The following is a 73-amino-acid chain: Translation initiation factor IF-1 (73 aa).

Residues 1–72 (MAKQDVIEME…TKGRITYRLR (72 aa)) enclose the S1-like domain.

The protein belongs to the IF-1 family. As to quaternary structure, component of the 30S ribosomal translation pre-initiation complex which assembles on the 30S ribosome in the order IF-2 and IF-3, IF-1 and N-formylmethionyl-tRNA(fMet); mRNA recruitment can occur at any time during PIC assembly.

It is found in the cytoplasm. Functionally, one of the essential components for the initiation of protein synthesis. Stabilizes the binding of IF-2 and IF-3 on the 30S subunit to which N-formylmethionyl-tRNA(fMet) subsequently binds. Helps modulate mRNA selection, yielding the 30S pre-initiation complex (PIC). Upon addition of the 50S ribosomal subunit IF-1, IF-2 and IF-3 are released leaving the mature 70S translation initiation complex. The sequence is that of Translation initiation factor IF-1 from Gloeobacter violaceus (strain ATCC 29082 / PCC 7421).